A 97-amino-acid polypeptide reads, in one-letter code: MSSEDDVIRVRLPDRKKGELFGVVTSMLGAGHIKVRCEDGVERLARIPGKMRKKIWIREGDVVIVVPWSFQKDRADIVWRYTNPQVEWLERKGYLKF.

An S1-like domain is found at 8–82 (IRVRLPDRKK…DRADIVWRYT (75 aa)).

The protein belongs to the eIF-1A family.

Functionally, seems to be required for maximal rate of protein biosynthesis. Enhances ribosome dissociation into subunits and stabilizes the binding of the initiator Met-tRNA(I) to 40 S ribosomal subunits. The polypeptide is Translation initiation factor 1A (eIF1A) (Archaeoglobus fulgidus (strain ATCC 49558 / DSM 4304 / JCM 9628 / NBRC 100126 / VC-16)).